Reading from the N-terminus, the 530-residue chain is Feruloyl esterase C (530 aa).

Residues 1–25 (MMLTSAILLLTLGVQLSHADDSSRE) form the signal peptide. 6 disulfides stabilise this stretch: Cys31–Cys78, Cys66–Cys117, Cys190–Cys444, Cys259–Cys276, Cys285–Cys294, and Cys506–Cys528. Ser191 (acyl-ester intermediate) is an active-site residue. Ca(2+) contacts are provided by Asp260, Asp263, Ala265, Asp267, and Val269. Catalysis depends on charge relay system residues Asp403 and His443.

Belongs to the tannase family.

It localises to the secreted. It carries out the reaction feruloyl-polysaccharide + H2O = ferulate + polysaccharide.. Involved in degradation of plant cell walls. Hydrolyzes the feruloyl-arabinose ester bond in arabinoxylans as well as the feruloyl-galactose and feruloyl-arabinose ester bonds in pectin. Active against methyl esters of sinapate (MSA) and caffeate (MCA). This Talaromyces stipitatus (strain ATCC 10500 / CBS 375.48 / QM 6759 / NRRL 1006) (Penicillium stipitatum) protein is Feruloyl esterase C (faeC).